Consider the following 364-residue polypeptide: RNA polymerase sigma factor SigA (364 aa).

Residues 132-202 are sigma-70 factor domain-2; the sequence is LAEANLRLVV…TRAIADQART (71 aa). Residues 156 to 159 carry the Interaction with polymerase core subunit RpoC motif; the sequence is DLIQ. The sigma-70 factor domain-3 stretch occupies residues 211–287; it reads ETINKLIRVQ…DDVIESPVDY (77 aa). A sigma-70 factor domain-4 region spans residues 300 to 353; it reads VMDTLTDREENVLRMRFGLDDGRMHTLEDVGKQFKVTRERIRQIEAKAIKKLRH. The segment at residues 326-345 is a DNA-binding region (H-T-H motif); that stretch reads LEDVGKQFKVTRERIRQIEA.

Belongs to the sigma-70 factor family. RpoD/SigA subfamily. In terms of assembly, interacts transiently with the RNA polymerase catalytic core.

It is found in the cytoplasm. Its function is as follows. Sigma factors are initiation factors that promote the attachment of RNA polymerase to specific initiation sites and are then released. This sigma factor is the primary sigma factor during exponential growth. In Lactococcus lactis subsp. cremoris (Streptococcus cremoris), this protein is RNA polymerase sigma factor SigA.